The following is a 96-amino-acid chain: uncharacterized protein (96 aa).

The region spanning 57–96 (MTKKVRTTKKDASISDAAALMDKHNVNRLPVVDENNKLVL) is the CBS domain.

This is an uncharacterized protein from Methanobacterium ivanovii.